The sequence spans 174 residues: ATP-dependent protease subunit HslV (174 aa).

Residue T2 is part of the active site. G157, C160, and T163 together coordinate Na(+).

The protein belongs to the peptidase T1B family. HslV subfamily. As to quaternary structure, a double ring-shaped homohexamer of HslV is capped on each side by a ring-shaped HslU homohexamer. The assembly of the HslU/HslV complex is dependent on binding of ATP.

It is found in the cytoplasm. The enzyme catalyses ATP-dependent cleavage of peptide bonds with broad specificity.. With respect to regulation, allosterically activated by HslU binding. Protease subunit of a proteasome-like degradation complex believed to be a general protein degrading machinery. The sequence is that of ATP-dependent protease subunit HslV from Shewanella woodyi (strain ATCC 51908 / MS32).